The chain runs to 261 residues: Eukaryotic translation initiation factor 3 subunit G (261 aa).

Positions 156-180 (QDADSKNALGLRGDGRQMERNRSDE) are disordered. Over residues 168–180 (GDGRQMERNRSDE) the composition is skewed to basic and acidic residues. An RRM domain is found at 181–259 (NTCRVTNLPQ…MVLKVEWTRP (79 aa)).

The protein belongs to the eIF-3 subunit G family. As to quaternary structure, component of the eukaryotic translation initiation factor 3 (eIF-3) complex.

The protein localises to the cytoplasm. RNA-binding component of the eukaryotic translation initiation factor 3 (eIF-3) complex, which is involved in protein synthesis of a specialized repertoire of mRNAs and, together with other initiation factors, stimulates binding of mRNA and methionyl-tRNAi to the 40S ribosome. The eIF-3 complex specifically targets and initiates translation of a subset of mRNAs involved in cell proliferation. This subunit can bind 18S rRNA. The protein is Eukaryotic translation initiation factor 3 subunit G of Caenorhabditis briggsae.